Reading from the N-terminus, the 159-residue chain is D-aminoacyl-tRNA deacylase (159 aa).

Residues 146-147 (GP) carry the Gly-cisPro motif, important for rejection of L-amino acids motif.

It belongs to the DTD family. In terms of assembly, homodimer.

The protein localises to the cytoplasm. It carries out the reaction glycyl-tRNA(Ala) + H2O = tRNA(Ala) + glycine + H(+). The catalysed reaction is a D-aminoacyl-tRNA + H2O = a tRNA + a D-alpha-amino acid + H(+). An aminoacyl-tRNA editing enzyme that deacylates mischarged D-aminoacyl-tRNAs. Also deacylates mischarged glycyl-tRNA(Ala), protecting cells against glycine mischarging by AlaRS. Acts via tRNA-based rather than protein-based catalysis; rejects L-amino acids rather than detecting D-amino acids in the active site. By recycling D-aminoacyl-tRNA to D-amino acids and free tRNA molecules, this enzyme counteracts the toxicity associated with the formation of D-aminoacyl-tRNA entities in vivo and helps enforce protein L-homochirality. This is D-aminoacyl-tRNA deacylase from Bifidobacterium animalis subsp. lactis (strain AD011).